Consider the following 308-residue polypeptide: Ribosomal RNA small subunit methyltransferase H (308 aa).

S-adenosyl-L-methionine-binding positions include Gly-38 to His-40, Asp-58, Phe-82, Asp-99, and Gln-106.

Belongs to the methyltransferase superfamily. RsmH family.

It localises to the cytoplasm. The enzyme catalyses cytidine(1402) in 16S rRNA + S-adenosyl-L-methionine = N(4)-methylcytidine(1402) in 16S rRNA + S-adenosyl-L-homocysteine + H(+). Functionally, specifically methylates the N4 position of cytidine in position 1402 (C1402) of 16S rRNA. The chain is Ribosomal RNA small subunit methyltransferase H from Acidovorax sp. (strain JS42).